The chain runs to 207 residues: GTP cyclohydrolase 1 (207 aa).

Positions 88, 91, and 162 each coordinate Zn(2+).

Belongs to the GTP cyclohydrolase I family. Toroid-shaped homodecamer, composed of two pentamers of five dimers.

It carries out the reaction GTP + H2O = 7,8-dihydroneopterin 3'-triphosphate + formate + H(+). It participates in cofactor biosynthesis; 7,8-dihydroneopterin triphosphate biosynthesis; 7,8-dihydroneopterin triphosphate from GTP: step 1/1. In Sulfurisphaera tokodaii (strain DSM 16993 / JCM 10545 / NBRC 100140 / 7) (Sulfolobus tokodaii), this protein is GTP cyclohydrolase 1.